Reading from the N-terminus, the 161-residue chain is Monooxygenase AgnL5 (161 aa).

This sequence belongs to the avfA family.

It functions in the pathway secondary metabolite biosynthesis. Its function is as follows. Monooxygenase; part of the gene cluster that mediates the biosynthesis of agnestins, dihydroxy-xanthone metabolites. The pathway begins with the assembly and cyclization of atrochrysone thioester by the non-reducing polyketide synthase Agnpks1. The atrochrysone carboxyl ACP thioesterase AgnL7 then breaks the thioester bond and releases the atrochrysone carboxylic acid as the first enzyme-free intermediate. The decarboxylase AgnL1 then catalyzes the concerted decarboxylation-elimination required to convert atochrysone carboxylic acid into emodin anthrone, which is further oxidized to emodin by the anthrone oxygenase AgnL2. Emodin then undergoes reduction catalyzed by the oxidoreductase AgnL4 to yield the dihydroquinone tautomer which is the substrate for reduction by the short chain dehydrogenase AgnL6 reduction to produce hydroxyketone, followed by AgnL8 dehydration and likely spontaneous autoxidation to chrysophanol. Baeyer-Villiger oxidation by the oxidase AgnL3 leads to monodictyphenone via cleavage of the C-10/C-10a bond of chrysophanol. Alternative cleavage at the C-4a/C-10 bond of chrysophanol also leads to the formation some cephalone F. Further conversion to agnestins A and B, requires reduction to dihydro-monodictyphenone, oxidation to agnestin C probably via an epoxide, and rearrangement to either agnestin A or agnestin B directly, although agnestin A or agnestin B can also interconvert. Within the cluster, AgnR1 is the only unassigned oxidoreductase present which could be involved in this conversion. However, AgnR1 seems not to be involved in this step, and thus genes involved in the proposed oxidation/reduction may be located elsewhere on the genome. Further agnestin A derivatives are probably formed by spontaneous decarboxylations, dehydrations and methanolysis reactions. The protein is Monooxygenase AgnL5 of Paecilomyces divaricatus (Penicillium divaricatum).